We begin with the raw amino-acid sequence, 302 residues long: Sulfate adenylyltransferase subunit 2 (302 aa).

Belongs to the PAPS reductase family. CysD subfamily. Heterodimer composed of CysD, the smaller subunit, and CysN.

It catalyses the reaction sulfate + ATP + H(+) = adenosine 5'-phosphosulfate + diphosphate. Its pathway is sulfur metabolism; hydrogen sulfide biosynthesis; sulfite from sulfate: step 1/3. With CysN forms the ATP sulfurylase (ATPS) that catalyzes the adenylation of sulfate producing adenosine 5'-phosphosulfate (APS) and diphosphate, the first enzymatic step in sulfur assimilation pathway. APS synthesis involves the formation of a high-energy phosphoric-sulfuric acid anhydride bond driven by GTP hydrolysis by CysN coupled to ATP hydrolysis by CysD. This Serratia proteamaculans (strain 568) protein is Sulfate adenylyltransferase subunit 2.